A 563-amino-acid polypeptide reads, in one-letter code: Dihydroxy-acid dehydratase (563 aa).

Cys-50 contacts [2Fe-2S] cluster. Asp-82 is a Mg(2+) binding site. Cys-123 contacts [2Fe-2S] cluster. Residues Asp-124 and Lys-125 each coordinate Mg(2+). The residue at position 125 (Lys-125) is an N6-carboxylysine. Cys-195 is a [2Fe-2S] cluster binding site. Residue Glu-447 participates in Mg(2+) binding. Ser-473 serves as the catalytic Proton acceptor.

This sequence belongs to the IlvD/Edd family. Homodimer. It depends on [2Fe-2S] cluster as a cofactor. The cofactor is Mg(2+).

It carries out the reaction (2R)-2,3-dihydroxy-3-methylbutanoate = 3-methyl-2-oxobutanoate + H2O. The catalysed reaction is (2R,3R)-2,3-dihydroxy-3-methylpentanoate = (S)-3-methyl-2-oxopentanoate + H2O. It participates in amino-acid biosynthesis; L-isoleucine biosynthesis; L-isoleucine from 2-oxobutanoate: step 3/4. The protein operates within amino-acid biosynthesis; L-valine biosynthesis; L-valine from pyruvate: step 3/4. Its function is as follows. Functions in the biosynthesis of branched-chain amino acids. Catalyzes the dehydration of (2R,3R)-2,3-dihydroxy-3-methylpentanoate (2,3-dihydroxy-3-methylvalerate) into 2-oxo-3-methylpentanoate (2-oxo-3-methylvalerate) and of (2R)-2,3-dihydroxy-3-methylbutanoate (2,3-dihydroxyisovalerate) into 2-oxo-3-methylbutanoate (2-oxoisovalerate), the penultimate precursor to L-isoleucine and L-valine, respectively. The sequence is that of Dihydroxy-acid dehydratase from Nostoc sp. (strain PCC 7120 / SAG 25.82 / UTEX 2576).